A 393-amino-acid chain; its full sequence is Double-stranded RNA-binding protein 5 (393 aa).

DRBM domains follow at residues 1 to 70 (MYKN…VLSS) and 87 to 155 (IYKN…SLKK). Disordered regions lie at residues 220-251 (ASSS…KSSK) and 335-371 (NPNL…QEKK). Residues 347-361 (VNEFTSSNNSCSVLN) show a composition bias toward polar residues.

As to quaternary structure, heterodimer with DRB1, DRB2 or DRB4. Interacts with DCL1 and DCL3. As to expression, expressed in the shoot apical meristem (SAM).

Binds double-stranded RNA. May be involved in RNA-mediated silencing. The chain is Double-stranded RNA-binding protein 5 (DRB5) from Arabidopsis thaliana (Mouse-ear cress).